Reading from the N-terminus, the 424-residue chain is Putative chloroquine resistance transporter (424 aa).

At 1-56 (MTVIKKGKNKKKNLKNDDRYKELDSLITNGSEIGDNSGRSCIKRFFKIIGNEMKNN) the chain is on the cytoplasmic side. Residues 57-77 (VYVYFLSILYLCVCVMNKVFA) traverse the membrane as a helical segment. The Vacuolar segment spans residues 78–88 (KRTLNKMGNYS). The N-linked (GlcNAc...) asparagine glycan is linked to Asn86. The chain crosses the membrane as a helical span at residues 89–109 (FVTSETHNIICIVVFQLLYFI). Over 110-125 (YRKTSTSGYKNESQKN) the chain is Cytoplasmic. A helical transmembrane segment spans residues 126 to 146 (FGWQFFLISLLDASTVIISMI). Over 147–156 (GLTRTTGNIQ) the chain is Vacuolar. A helical transmembrane segment spans residues 157–177 (SFIMQLIIPVNMYFCFMFLGY). Topologically, residues 178–180 (RYH) are cytoplasmic. A helical transmembrane segment spans residues 181–201 (LFNYLGAFIILITIAVVETFL). The Vacuolar portion of the chain corresponds to 202-209 (SFETQSEN). The helical transmembrane segment at 210–230 (SIIFNLIMISALIPLSFSNMT) threads the bilayer. Over 231-248 (REVVFKKHKINILRLNAM) the chain is Cytoplasmic. Residues 249 to 269 (VVLFQFFTSLLVLPVYNIPFL) traverse the membrane as a helical segment. Residues 270–317 (KEIYMPFSEMSTNINNGLRCLFYGQNTVVENCGVGMVKMCDNCEGAWK) lie on the Vacuolar side of the membrane. 2 disulfide bridges follow: Cys289–Cys312 and Cys301–Cys309. The helical transmembrane segment at 318–338 (TFITFSFFNICDNLLACYIID) threads the bilayer. Residues 339-346 (KFSTMTYT) are Cytoplasmic-facing. Residues 347 to 367 (IVSCIQGPAITIAYYFKFLAG) traverse the membrane as a helical segment. Topologically, residues 368–377 (DAVRKPRILD) are vacuolar. The chain crosses the membrane as a helical span at residues 378-398 (FLTLFGYLFGTIIYRIGNIIL). Over 399-424 (EKKKMVKSQNSNDSEAELTCIETSTA) the chain is Cytoplasmic.

Belongs to the CRT-like transporter family.

It localises to the vacuole membrane. Nutrient transporter. Involved in maintaining the osmotic homeostasis of the digestive vacuole. This is Putative chloroquine resistance transporter from Plasmodium yoelii yoelii.